A 470-amino-acid polypeptide reads, in one-letter code: Neuraminidase (470 aa).

Topologically, residues 1–14 are intravirion; the sequence is MNPNQKIITIGSAS. Residues 11–32 are involved in apical transport and lipid raft association; it reads GSASLGILILNVILHVVSIIVT. A helical membrane pass occupies residues 15–35; the sequence is LGILILNVILHVVSIIVTVLV. The interval 32 to 86 is hypervariable stalk region; the sequence is TVLVLNNNGTGLNCNGTIIREYNETVRVERVIQWYNTNTIEYIERPSNEYYMNNT. The Virion surface segment spans residues 36–470; sequence LNNNGTGLNC…AILPFDIDKM (435 aa). 4 N-linked (GlcNAc...) asparagine; by host glycosylation sites follow: Asn-39, Asn-46, Asn-54, and Asn-84. A head of neuraminidase region spans residues 89–470; it reads LCEAQGFAPF…AILPFDIDKM (382 aa). 8 disulfide bridges follow: Cys-90–Cys-417, Cys-122–Cys-127, Cys-182–Cys-229, Cys-231–Cys-236, Cys-277–Cys-290, Cys-279–Cys-288, Cys-316–Cys-335, and Cys-421–Cys-446. Arg-116 is a binding site for substrate. N-linked (GlcNAc...) asparagine; by host glycosylation occurs at Asn-144. Asp-149 acts as the Proton donor/acceptor in catalysis. A substrate-binding site is contributed by Arg-150. Residue 275-276 participates in substrate binding; the sequence is EE. Arg-291 is a substrate binding site. Asp-292 is a binding site for Ca(2+). Asn-293 carries N-linked (GlcNAc...) asparagine; by host glycosylation. Positions 296 and 322 each coordinate Ca(2+). Residue Arg-368 participates in substrate binding. Asn-398 carries N-linked (GlcNAc...) asparagine; by host glycosylation. Tyr-402 (nucleophile) is an active-site residue.

Belongs to the glycosyl hydrolase 34 family. As to quaternary structure, homotetramer. The cofactor is Ca(2+). N-glycosylated.

The protein resides in the virion membrane. The protein localises to the host apical cell membrane. It catalyses the reaction Hydrolysis of alpha-(2-&gt;3)-, alpha-(2-&gt;6)-, alpha-(2-&gt;8)- glycosidic linkages of terminal sialic acid residues in oligosaccharides, glycoproteins, glycolipids, colominic acid and synthetic substrates.. With respect to regulation, inhibited by the neuraminidase inhibitors zanamivir (Relenza) and oseltamivir (Tamiflu). These drugs interfere with the release of progeny virus from infected cells and are effective against all influenza strains. Resistance to neuraminidase inhibitors is quite rare. In terms of biological role, catalyzes the removal of terminal sialic acid residues from viral and cellular glycoconjugates. Cleaves off the terminal sialic acids on the glycosylated HA during virus budding to facilitate virus release. Additionally helps virus spread through the circulation by further removing sialic acids from the cell surface. These cleavages prevent self-aggregation and ensure the efficient spread of the progeny virus from cell to cell. Otherwise, infection would be limited to one round of replication. Described as a receptor-destroying enzyme because it cleaves a terminal sialic acid from the cellular receptors. May facilitate viral invasion of the upper airways by cleaving the sialic acid moieties on the mucin of the airway epithelial cells. Likely to plays a role in the budding process through its association with lipid rafts during intracellular transport. May additionally display a raft-association independent effect on budding. Plays a role in the determination of host range restriction on replication and virulence. Sialidase activity in late endosome/lysosome traffic seems to enhance virus replication. The chain is Neuraminidase from Influenza A virus (strain A/Equine/Santiago/1/1985 H3N8).